We begin with the raw amino-acid sequence, 352 residues long: Minor capsid protein P14 (352 aa).

The disordered stretch occupies residues 122 to 214; it reads YNEPAPKPKP…RPARRCDENP (93 aa). Positions 129 to 145 are enriched in basic residues; it reads PKPKPKPKPAPKPKPAP. The segment covering 146–204 has biased composition (pro residues); the sequence is KPKPAPKPAPKPAPKPAPKPAPKPAPKPAPKPAPEPAPEPAPEPAPKPAPEPAPEPAPI. Residues 244 to 264 form a hydrophobic region; it reads WWLWGGIAILVIVLMIGGYFI.

In terms of assembly, interacts with the major capsid protein.

The protein resides in the virion. In terms of biological role, one of the minor capsid proteins that constitute a network internal to the major capsid proteins and outside the lipid membrane. The minor capsid protein P14 does not serve a cross-linking function between neighboring capsomers, it may play a role in the viral capsid assembly. The sequence is that of Minor capsid protein P14 from Chlorella (PBCV-1).